A 331-amino-acid chain; its full sequence is Holliday junction branch migration complex subunit RuvB (331 aa).

Residues 1–182 form a large ATPase domain (RuvB-L) region; it reads MSNDTLHKYE…FGIPLHLEFY (182 aa). Residues leucine 21, arginine 22, glycine 63, lysine 66, threonine 67, threonine 68, 129 to 131, arginine 172, tyrosine 182, and arginine 219 each bind ATP; that span reads EDY. Threonine 67 is a binding site for Mg(2+). The interval 183–254 is small ATPAse domain (RuvB-S); sequence SVDELVLVIK…FANSALFRLG (72 aa). Residues 257–331 are head domain (RuvB-H); sequence GAGFDKMDLK…FEYLLSSKYI (75 aa). DNA-binding residues include arginine 310 and arginine 315.

It belongs to the RuvB family. As to quaternary structure, homohexamer. Forms an RuvA(8)-RuvB(12)-Holliday junction (HJ) complex. HJ DNA is sandwiched between 2 RuvA tetramers; dsDNA enters through RuvA and exits via RuvB. An RuvB hexamer assembles on each DNA strand where it exits the tetramer. Each RuvB hexamer is contacted by two RuvA subunits (via domain III) on 2 adjacent RuvB subunits; this complex drives branch migration. In the full resolvosome a probable DNA-RuvA(4)-RuvB(12)-RuvC(2) complex forms which resolves the HJ.

Its subcellular location is the cytoplasm. The enzyme catalyses ATP + H2O = ADP + phosphate + H(+). In terms of biological role, the RuvA-RuvB-RuvC complex processes Holliday junction (HJ) DNA during genetic recombination and DNA repair, while the RuvA-RuvB complex plays an important role in the rescue of blocked DNA replication forks via replication fork reversal (RFR). RuvA specifically binds to HJ cruciform DNA, conferring on it an open structure. The RuvB hexamer acts as an ATP-dependent pump, pulling dsDNA into and through the RuvAB complex. RuvB forms 2 homohexamers on either side of HJ DNA bound by 1 or 2 RuvA tetramers; 4 subunits per hexamer contact DNA at a time. Coordinated motions by a converter formed by DNA-disengaged RuvB subunits stimulates ATP hydrolysis and nucleotide exchange. Immobilization of the converter enables RuvB to convert the ATP-contained energy into a lever motion, pulling 2 nucleotides of DNA out of the RuvA tetramer per ATP hydrolyzed, thus driving DNA branch migration. The RuvB motors rotate together with the DNA substrate, which together with the progressing nucleotide cycle form the mechanistic basis for DNA recombination by continuous HJ branch migration. Branch migration allows RuvC to scan DNA until it finds its consensus sequence, where it cleaves and resolves cruciform DNA. The polypeptide is Holliday junction branch migration complex subunit RuvB (Anaplasma marginale (strain Florida)).